The primary structure comprises 121 residues: Ribosome-binding factor A (121 aa).

This sequence belongs to the RbfA family. In terms of assembly, monomer. Binds 30S ribosomal subunits, but not 50S ribosomal subunits or 70S ribosomes.

The protein resides in the cytoplasm. In terms of biological role, one of several proteins that assist in the late maturation steps of the functional core of the 30S ribosomal subunit. Associates with free 30S ribosomal subunits (but not with 30S subunits that are part of 70S ribosomes or polysomes). Required for efficient processing of 16S rRNA. May interact with the 5'-terminal helix region of 16S rRNA. The sequence is that of Ribosome-binding factor A from Clostridium tetani (strain Massachusetts / E88).